We begin with the raw amino-acid sequence, 251 residues long: Astacin (251 aa).

Positions 1-15 are cleaved as a signal peptide; sequence MQCAVLLVLLGVVAA. A propeptide spans 16–49 (activation peptide); that stretch reads SPIIPEAARALYYNDGMFEGDIKLRAGRQPARVG. The Peptidase M12A domain maps to 50-248; it reads AAILGDEYLW…INNLYTNECS (199 aa). Disulfide bonds link cysteine 91–cysteine 247 and cysteine 113–cysteine 133. Residue histidine 141 coordinates Zn(2+). Glutamate 142 is a catalytic residue. Residues histidine 145 and histidine 151 each coordinate Zn(2+). Positions 250-251 are excised as a propeptide; that stretch reads RH.

In terms of assembly, monomer. The cofactor is Zn(2+).

It carries out the reaction Hydrolysis of peptide bonds in substrates containing five or more amino acids, preferentially with Ala in P1', and Pro in P2'.. Its function is as follows. Metalloprotease. This protease prefers to cleave in front of small aliphatic residues (P1'). The presence of Lys or Arg in the P1 and P2 position yields high-turnover substrates. In the P3 position the enzyme prefers Pro &gt; Val &gt; Leu &gt; Ala &gt; Gly. The chain is Astacin from Astacus astacus (Noble crayfish).